We begin with the raw amino-acid sequence, 426 residues long: Phosphomethylpyrimidine synthase (426 aa).

Residues Asn-65, Met-94, Tyr-123, His-162, 184 to 186 (SRG), 225 to 228 (DGMR), and Glu-264 each bind substrate. Zn(2+) is bound at residue His-268. Position 291 (Tyr-291) interacts with substrate. His-332 contributes to the Zn(2+) binding site. 3 residues coordinate [4Fe-4S] cluster: Cys-408, Cys-411, and Cys-415.

This sequence belongs to the ThiC family. It depends on [4Fe-4S] cluster as a cofactor.

It carries out the reaction 5-amino-1-(5-phospho-beta-D-ribosyl)imidazole + S-adenosyl-L-methionine = 4-amino-2-methyl-5-(phosphooxymethyl)pyrimidine + CO + 5'-deoxyadenosine + formate + L-methionine + 3 H(+). The protein operates within cofactor biosynthesis; thiamine diphosphate biosynthesis. In terms of biological role, catalyzes the synthesis of the hydroxymethylpyrimidine phosphate (HMP-P) moiety of thiamine from aminoimidazole ribotide (AIR) in a radical S-adenosyl-L-methionine (SAM)-dependent reaction. This is Phosphomethylpyrimidine synthase from Methanococcus maripaludis (strain C7 / ATCC BAA-1331).